The following is a 346-amino-acid chain: Beta-ketoacyl-[acyl-carrier-protein] synthase III (346 aa).

Catalysis depends on residues cysteine 120 and histidine 256. The ACP-binding stretch occupies residues 257-261 (QANIR). Residue asparagine 286 is part of the active site.

It belongs to the thiolase-like superfamily. FabH family. Homodimer.

Its subcellular location is the cytoplasm. It catalyses the reaction malonyl-[ACP] + acetyl-CoA + H(+) = 3-oxobutanoyl-[ACP] + CO2 + CoA. It participates in lipid metabolism; fatty acid biosynthesis. Its function is as follows. Catalyzes the condensation reaction of fatty acid synthesis by the addition to an acyl acceptor of two carbons from malonyl-ACP. Catalyzes the first condensation reaction which initiates fatty acid synthesis and may therefore play a role in governing the total rate of fatty acid production. Possesses both acetoacetyl-ACP synthase and acetyl transacylase activities. Its substrate specificity determines the biosynthesis of branched-chain and/or straight-chain of fatty acids. In Deinococcus geothermalis (strain DSM 11300 / CIP 105573 / AG-3a), this protein is Beta-ketoacyl-[acyl-carrier-protein] synthase III.